The sequence spans 339 residues: DNA-directed RNA polymerase subunit alpha (339 aa).

An alpha N-terminal domain (alpha-NTD) region spans residues 1–235; it reads MVIQKNWQEL…DQLQIFVNFE (235 aa). Residues 251–339 form an alpha C-terminal domain (alpha-CTD) region; that stretch reads FNPALLKKVD…DLAKRFEEHY (89 aa).

This sequence belongs to the RNA polymerase alpha chain family. In terms of assembly, homodimer. The RNAP catalytic core consists of 2 alpha, 1 beta, 1 beta' and 1 omega subunit. When a sigma factor is associated with the core the holoenzyme is formed, which can initiate transcription.

The enzyme catalyses RNA(n) + a ribonucleoside 5'-triphosphate = RNA(n+1) + diphosphate. Functionally, DNA-dependent RNA polymerase catalyzes the transcription of DNA into RNA using the four ribonucleoside triphosphates as substrates. This is DNA-directed RNA polymerase subunit alpha from Methylobacterium sp. (strain 4-46).